A 479-amino-acid chain; its full sequence is Glutamyl-tRNA(Gln) amidotransferase subunit A (479 aa).

Catalysis depends on charge relay system residues Lys71 and Ser146. The Acyl-ester intermediate role is filled by Ser170.

Belongs to the amidase family. GatA subfamily. In terms of assembly, heterotrimer of A, B and C subunits.

It carries out the reaction L-glutamyl-tRNA(Gln) + L-glutamine + ATP + H2O = L-glutaminyl-tRNA(Gln) + L-glutamate + ADP + phosphate + H(+). In terms of biological role, allows the formation of correctly charged Gln-tRNA(Gln) through the transamidation of misacylated Glu-tRNA(Gln) in organisms which lack glutaminyl-tRNA synthetase. The reaction takes place in the presence of glutamine and ATP through an activated gamma-phospho-Glu-tRNA(Gln). This Lactobacillus johnsonii (strain CNCM I-12250 / La1 / NCC 533) protein is Glutamyl-tRNA(Gln) amidotransferase subunit A.